Here is a 330-residue protein sequence, read N- to C-terminus: Glucokinase (330 aa).

Residue 14–19 participates in ATP binding; it reads ADIGGT.

The protein belongs to the bacterial glucokinase family.

Its subcellular location is the cytoplasm. The catalysed reaction is D-glucose + ATP = D-glucose 6-phosphate + ADP + H(+). This is Glucokinase from Colwellia psychrerythraea (strain 34H / ATCC BAA-681) (Vibrio psychroerythus).